The sequence spans 508 residues: Chromosomal replication initiator protein DnaA (508 aa).

The segment at 1 to 90 (MSVELWQQCV…RRSSAPRAAP (90 aa)) is domain I, interacts with DnaA modulators. The tract at residues 91 to 171 (NAPVSAAVAA…QVEGALKHTS (81 aa)) is domain II. Residues 130–160 (EVEEPSSRDSFDSMSDSGSVPAASGRTEQRT) form a disordered region. A domain III, AAA+ region region spans residues 172-388 (YLNRTFTFET…GALKRVIAHS (217 aa)). ATP contacts are provided by Gly216, Gly218, Lys219, and Thr220. A domain IV, binds dsDNA region spans residues 389-508 (HFMGRDITIE…YKNLLRTLTT (120 aa)).

It belongs to the DnaA family. Oligomerizes as a right-handed, spiral filament on DNA at oriC.

The protein resides in the cytoplasm. Functionally, plays an essential role in the initiation and regulation of chromosomal replication. ATP-DnaA binds to the origin of replication (oriC) to initiate formation of the DNA replication initiation complex once per cell cycle. Binds the DnaA box (a 9 base pair repeat at the origin) and separates the double-stranded (ds)DNA. Forms a right-handed helical filament on oriC DNA; dsDNA binds to the exterior of the filament while single-stranded (ss)DNA is stabiized in the filament's interior. The ATP-DnaA-oriC complex binds and stabilizes one strand of the AT-rich DNA unwinding element (DUE), permitting loading of DNA polymerase. After initiation quickly degrades to an ADP-DnaA complex that is not apt for DNA replication. Binds acidic phospholipids. The sequence is that of Chromosomal replication initiator protein DnaA from Pseudomonas entomophila (strain L48).